The chain runs to 668 residues: Threonine--tRNA ligase (668 aa).

The region spanning 1-61 is the TGS domain; the sequence is MSDLKIALTH…ADGDQVEPVA (61 aa). Residues 265–564 form a catalytic region; the sequence is DHRKLGRDLD…LVEHYAGAFP (300 aa). Residues Cys-358, His-409, and His-541 each coordinate Zn(2+).

This sequence belongs to the class-II aminoacyl-tRNA synthetase family. In terms of assembly, homodimer. Zn(2+) is required as a cofactor.

The protein resides in the cytoplasm. It catalyses the reaction tRNA(Thr) + L-threonine + ATP = L-threonyl-tRNA(Thr) + AMP + diphosphate + H(+). Its function is as follows. Catalyzes the attachment of threonine to tRNA(Thr) in a two-step reaction: L-threonine is first activated by ATP to form Thr-AMP and then transferred to the acceptor end of tRNA(Thr). Also edits incorrectly charged L-seryl-tRNA(Thr). In Nocardioides sp. (strain ATCC BAA-499 / JS614), this protein is Threonine--tRNA ligase.